The following is a 1547-amino-acid chain: Transposon Ty3-G Gag-Pol polyprotein (1547 aa).

Ser2 is subject to N-acetylserine. The segment at 265–282 (RLCFYCKKEGHRLNECRA) adopts a CCHC-type zinc-finger fold. Residue Asp336 is the For protease activity; shared with dimeric partner of the active site. A Reverse transcriptase domain is found at 620 to 797 (LDNKFIVPSK…EETEFLGYSI (178 aa)). 6 residues coordinate Mg(2+): Asp686, Asp748, Asp749, Asp893, Glu936, and Asp961. Positions 893–1011 (DASKDGIGAV…VADAISRAVY (119 aa)) constitute an RNase H Ty3/gyspy-type domain. The tract at residues 1106–1145 (HTLFGGHFGVTVTLAKISPIYYWPKLQHSIIQYIRTCVQC) is integrase-type zinc finger-like. Residues 1159–1324 (LQPLPIAEGR…SPFEIDLGYL (166 aa)) enclose the Integrase catalytic domain. Mg(2+) is bound by residues Asp1175 and Asp1236.

In terms of assembly, the protease is a homodimer, whose active site consists of two apposed aspartic acid residues. Post-translationally, initially, virus-like particles (VLPs) are composed of the structural unprocessed proteins Gag and Gag-Pol, and also contain the host initiator methionine tRNA (tRNA(i)-Met) which serves as a primer for minus-strand DNA synthesis, and a dimer of genomic Ty RNA. Processing of the polyproteins occurs within the particle and proceeds by an ordered pathway, called maturation. First, the protease (PR) is released by autocatalytic cleavage of the Gag-Pol polyprotein, and this cleavage is a prerequisite for subsequent processing at the remaining sites to release the mature structural and catalytic proteins. Maturation takes place prior to the RT reaction and is required to produce transposition-competent VLPs.

Its subcellular location is the cytoplasm. The protein localises to the nucleus. The enzyme catalyses DNA(n) + a 2'-deoxyribonucleoside 5'-triphosphate = DNA(n+1) + diphosphate. It carries out the reaction Endonucleolytic cleavage to 5'-phosphomonoester.. Functionally, capsid protein (CA) is the structural component of the virus-like particle (VLP), forming the shell that encapsulates the genomic RNA-nucleocapsid complex. Nucleocapsid protein p11 (NC) forms the nucleocore that coats the retro-elements dimeric RNA. Binds these RNAs through its zinc fingers. Promotes primer tRNA(i)-Met annealing to the multipartite primer-binding site (PBS), dimerization of Ty3 RNA and initiation of reverse transcription. In terms of biological role, the aspartyl protease (PR) mediates the proteolytic cleavages of the Gag and Gag-Pol polyproteins after assembly of the VLP. Its function is as follows. Reverse transcriptase/ribonuclease H (RT) is a multifunctional enzyme that catalyzes the conversion of the retro-elements RNA genome into dsDNA within the VLP. The enzyme displays a DNA polymerase activity that can copy either DNA or RNA templates, and a ribonuclease H (RNase H) activity that cleaves the RNA strand of RNA-DNA heteroduplexes during plus-strand synthesis and hydrolyzes RNA primers. The conversion leads to a linear dsDNA copy of the retrotransposon that includes long terminal repeats (LTRs) at both ends. Functionally, integrase (IN) targets the VLP to the nucleus, where a subparticle preintegration complex (PIC) containing at least integrase and the newly synthesized dsDNA copy of the retrotransposon must transit the nuclear membrane. Once in the nucleus, integrase performs the integration of the dsDNA into the host genome. This is Transposon Ty3-G Gag-Pol polyprotein (TY3B-G) from Saccharomyces cerevisiae (strain ATCC 204508 / S288c) (Baker's yeast).